We begin with the raw amino-acid sequence, 418 residues long: MAGRLPACVVDCGTGYTKLGYAGNTEPQFIIPSCIAIKESAKVGDQAQRRVMKGVDDLDFFIGDEAIEKPTYATKWPIRHGIVEDWDLMERFMEQVIFKYLRAEPEDHYFLLTEPPLNTPENREYTAEIMFESFNVPGLYIAVQAVLALAASWTSRQVGERTLTGTVIDSGDGVTHVIPVAEGYVIGSCIKHIPIAGRDITYFIQQLLRDREVGIPPEQSLETAKAVKERYSYVCPDLVKEFNKYDTDGSKWIKQYTGVNAISKKEFSIDVGYERFLGPEIFFHPEFANPDFTQPISEVVDEVIQNCPIDVRRPLYKNIVLSGGSTMFRDFGRRLQRDLKRTVDARLKLSEELSGGRLKPKPIDVQVITHHMQRYAVWFGGSMLASTPEFYQVCHTKKDYEEIGPSICRHNPVFGVMS.

Residue A2 is modified to N-acetylalanine. N6-acetyllysine occurs at positions 240, 244, 251, and 254.

The protein belongs to the actin family. ARP3 subfamily. Component of the Arp2/3 complex composed of ACTR2/ARP2, ACTR3/ARP3, ARPC1B/p41-ARC, ARPC2/p34-ARC, ARPC3/p21-ARC, ARPC4/p20-ARC and ARPC5/p16-ARC. Interacts with WHDC1. Interacts weakly with MEFV. Interacts with AVIL. As to quaternary structure, (Microbial infection) Interacts with bacterium B.thailandensis BimA.

It localises to the cytoplasm. Its subcellular location is the cytoskeleton. The protein localises to the cell projection. It is found in the nucleus. In terms of biological role, ATP-binding component of the Arp2/3 complex, a multiprotein complex that mediates actin polymerization upon stimulation by nucleation-promoting factor (NPF). The Arp2/3 complex mediates the formation of branched actin networks in the cytoplasm, providing the force for cell motility. Seems to contact the pointed end of the daughter actin filament. In podocytes, required for the formation of lamellipodia downstream of AVIL and PLCE1 regulation. In addition to its role in the cytoplasmic cytoskeleton, the Arp2/3 complex also promotes actin polymerization in the nucleus, thereby regulating gene transcription and repair of damaged DNA. The Arp2/3 complex promotes homologous recombination (HR) repair in response to DNA damage by promoting nuclear actin polymerization, leading to drive motility of double-strand breaks (DSBs). Plays a role in ciliogenesis. This chain is Actin-related protein 3 (Actr3), found in Mus musculus (Mouse).